The primary structure comprises 257 residues: Insulin-induced gene 1 protein (257 aa).

Residues 1 to 64 lie on the Cytoplasmic side of the membrane; it reads MPRLHDHVWS…ARPGSWHHDL (64 aa). Residues 32–54 are disordered; it reads CPQGSGAPEPAPRSPRAGTAGCG. Residues 65-87 form a helical membrane-spanning segment; sequence VQRSLVLFSFGVVLALVLNLLQI. The Extracellular portion of the chain corresponds to 88 to 106; the sequence is QRNVTLFPDEVIATIFSSA. Residues 107-124 traverse the membrane as a helical segment; that stretch reads WWVPPCCGTAAAVVGLLY. Topologically, residues 125–139 are cytoplasmic; sequence PCIDSHLGEPHKFKR. Residues K136 and K138 each participate in a glycyl lysine isopeptide (Lys-Gly) (interchain with G-Cter in ubiquitin) cross-link. Residues 140–162 form a helical membrane-spanning segment; it reads EWASVMRCIAVFVGINHASAKLD. Over 163–165 the chain is Extracellular; sequence FAN. Residues 166 to 184 traverse the membrane as a helical segment; it reads NVQLSLTLAALSLGLWWTF. Residues 185 to 189 are Cytoplasmic-facing; that stretch reads DRSRS. Position 187 is a phosphoserine (S187). The helical transmembrane segment at 190 to 211 threads the bilayer; it reads GLGLGITIAFLATLITQFLVYN. The Extracellular segment spans residues 212 to 225; sequence GVYQYTSPDFLYIR. A helical membrane pass occupies residues 226–243; that stretch reads SWLPCIFFSGGVTVGNIG. At 244 to 257 the chain is on the cytoplasmic side; sequence RQLAMGVPEKPHSD. Positions 251–257 match the KxHxx motif; it reads PEKPHSD.

It belongs to the INSIG family. As to quaternary structure, interacts with SCAP; interaction is direct and only takes place in the presence of sterols; it prevents interaction between SCAP and the coat protein complex II (COPII). Associates with the SCAP-SREBP complex (composed of SCAP and SREBF1/SREBP1 or SREBF2/SREBP2); association is mediated via its interaction with SCAP and only takes place in the presence of sterols. Interaction with SCAP is mutually exclusive with PAQR3. Interacts with HMGCR (via its SSD); the interaction, accelerated by sterols, leads to the recruitment of HMGCR to AMFR/gp78 for its ubiquitination by the sterol-mediated ERAD pathway. Interacts with AMFR/gp78 (via its membrane domain); the interaction recruits HMCR at the ER membrane for its ubiquitination and degradation by the sterol-mediated ERAD pathway. Interacts with SOAT2/ACAT2; leading to promote recruitment of AMFR/gp78 and subsequent ubiquitination of SOAT2/ACAT2. Interacts with RNF139. Interacts with RNF145. In terms of processing, phosphorylation at Ser-187 by PCK1 reduces binding to oxysterol, disrupting the interaction between INSIG1 and SCAP, thereby promoting nuclear translocation of SREBP proteins (SREBF1/SREBP1 or SREBF2/SREBP2) and subsequent transcription of downstream lipogenesis-related genes. Post-translationally, ubiquitinated by AMFR/gp78 in response to sterol deprivation, leading to its degradation: when the SCAP-SREBP complex becomes dissociated from INSIG1, INSIG1 is then ubiquitinated and degraded in proteasomes. Although ubiquitination is required for rapid INSIG1 degradation, it is not required for release of the SCAP-SREBP complex. Ubiquitinated by RNF139.

Its subcellular location is the endoplasmic reticulum membrane. Oxysterol-binding protein that mediates feedback control of cholesterol synthesis by controlling both endoplasmic reticulum to Golgi transport of SCAP and degradation of HMGCR. Acts as a negative regulator of cholesterol biosynthesis by mediating the retention of the SCAP-SREBP complex in the endoplasmic reticulum, thereby blocking the processing of sterol regulatory element-binding proteins (SREBPs) SREBF1/SREBP1 and SREBF2/SREBP2. Binds oxysterol, including 25-hydroxycholesterol, regulating interaction with SCAP and retention of the SCAP-SREBP complex in the endoplasmic reticulum. In presence of oxysterol, interacts with SCAP, retaining the SCAP-SREBP complex in the endoplasmic reticulum, thereby preventing SCAP from escorting SREBF1/SREBP1 and SREBF2/SREBP2 to the Golgi. Sterol deprivation or phosphorylation by PCK1 reduce oxysterol-binding, disrupting the interaction between INSIG1 and SCAP, thereby promoting Golgi transport of the SCAP-SREBP complex, followed by processing and nuclear translocation of SREBF1/SREBP1 and SREBF2/SREBP2. Also regulates cholesterol synthesis by regulating degradation of HMGCR: initiates the sterol-mediated ubiquitin-mediated endoplasmic reticulum-associated degradation (ERAD) of HMGCR via recruitment of the reductase to the ubiquitin ligases AMFR/gp78 and/or RNF139. Also regulates degradation of SOAT2/ACAT2 when the lipid levels are low: initiates the ubiquitin-mediated degradation of SOAT2/ACAT2 via recruitment of the ubiquitin ligases AMFR/gp78. The chain is Insulin-induced gene 1 protein from Cricetulus griseus (Chinese hamster).